A 135-amino-acid polypeptide reads, in one-letter code: Holo-[acyl-carrier-protein] synthase (135 aa).

Mg(2+)-binding residues include aspartate 7 and glutamate 57.

The protein belongs to the P-Pant transferase superfamily. AcpS family. Requires Mg(2+) as cofactor.

Its subcellular location is the cytoplasm. The enzyme catalyses apo-[ACP] + CoA = holo-[ACP] + adenosine 3',5'-bisphosphate + H(+). In terms of biological role, transfers the 4'-phosphopantetheine moiety from coenzyme A to a Ser of acyl-carrier-protein. The sequence is that of Holo-[acyl-carrier-protein] synthase from Corynebacterium glutamicum (strain ATCC 13032 / DSM 20300 / JCM 1318 / BCRC 11384 / CCUG 27702 / LMG 3730 / NBRC 12168 / NCIMB 10025 / NRRL B-2784 / 534).